Here is an 882-residue protein sequence, read N- to C-terminus: DNA mismatch repair protein MutS (882 aa).

635–642 (GPNMGGKS) is a binding site for ATP.

It belongs to the DNA mismatch repair MutS family.

This protein is involved in the repair of mismatches in DNA. It is possible that it carries out the mismatch recognition step. This protein has a weak ATPase activity. The sequence is that of DNA mismatch repair protein MutS from Janthinobacterium sp. (strain Marseille) (Minibacterium massiliensis).